Consider the following 409-residue polypeptide: Lissencephaly-1 homolog (409 aa).

The 33-residue stretch at 7-39 folds into the LisH domain; that stretch reads QKEELNKAIADYLHQCGFEDTLNAFKQDANMPG. A coiled-coil region spans residues 54–80; it reads TSVIRLQKKVMDLETRLSEAEKEVHHG. The segment at 72–95 is disordered; the sequence is EAEKEVHHGGGPKKTRSPEDWIPR. 7 WD repeats span residues 104 to 145, 146 to 187, 188 to 229, 231 to 269, 272 to 332, 335 to 374, and 377 to 409; these read GHRS…RTLK, GHTD…RTLH, GHDH…KTFQ, HGEWVRRVRPNADGSLIASCSNDQTIRVWVVASRECKCD, DHDH…CLVT, GHDNWVRAVMFHPGGKFIVSCSDDKTLRIWDYKNKRCAKT, and AHEHFVTTLDFHKSAPFVATGSVDLTLKVWECR.

Belongs to the WD repeat LIS1/nudF family.

Its subcellular location is the cytoplasm. The protein localises to the cytoskeleton. The protein resides in the microtubule organizing center. It localises to the centrosome. Functionally, positively regulates the activity of the minus-end directed microtubule motor protein dynein. May enhance dynein-mediated microtubule sliding by targeting dynein to the microtubule plus end. Required for several dynein- and microtubule-dependent processes. This chain is Lissencephaly-1 homolog, found in Nematostella vectensis (Starlet sea anemone).